Consider the following 650-residue polypeptide: Chaperone protein DnaK (650 aa).

Residue Thr200 is modified to Phosphothreonine; by autocatalysis. The span at 612–632 shows a compositional bias: low complexity; sequence GEGATAGAAAGAGAAGGQQAQ. A disordered region spans residues 612-650; it reads GEGATAGAAAGAGAAGGQQAQPQDDNVVDAEFKEVNDKK. Residues 641–650 show a composition bias toward basic and acidic residues; the sequence is AEFKEVNDKK.

The protein belongs to the heat shock protein 70 family.

In terms of biological role, acts as a chaperone. In Cupriavidus necator (strain ATCC 17699 / DSM 428 / KCTC 22496 / NCIMB 10442 / H16 / Stanier 337) (Ralstonia eutropha), this protein is Chaperone protein DnaK.